Consider the following 247-residue polypeptide: 2,3-bisphosphoglycerate-dependent phosphoglycerate mutase (247 aa).

Substrate contacts are provided by residues 7–14 (RHGESEWN), 20–21 (TG), Arg59, 86–89 (ERHY), Lys97, 113–114 (RR), and 182–183 (GN). His8 acts as the Tele-phosphohistidine intermediate in catalysis. Residue Glu86 is the Proton donor/acceptor of the active site.

Belongs to the phosphoglycerate mutase family. BPG-dependent PGAM subfamily.

It catalyses the reaction (2R)-2-phosphoglycerate = (2R)-3-phosphoglycerate. Its pathway is carbohydrate degradation; glycolysis; pyruvate from D-glyceraldehyde 3-phosphate: step 3/5. In terms of biological role, catalyzes the interconversion of 2-phosphoglycerate and 3-phosphoglycerate. This chain is 2,3-bisphosphoglycerate-dependent phosphoglycerate mutase, found in Treponema denticola (strain ATCC 35405 / DSM 14222 / CIP 103919 / JCM 8153 / KCTC 15104).